Consider the following 221-residue polypeptide: Enolase-phosphatase E1 (221 aa).

Positions 9 and 11 each coordinate Mg(2+). Substrate-binding positions include Ser-116–Ser-117 and Lys-152. Asp-180 lines the Mg(2+) pocket.

This sequence belongs to the HAD-like hydrolase superfamily. MasA/MtnC family. As to quaternary structure, monomer. Mg(2+) is required as a cofactor.

It is found in the cytoplasm. Its subcellular location is the nucleus. It carries out the reaction 5-methylsulfanyl-2,3-dioxopentyl phosphate + H2O = 1,2-dihydroxy-5-(methylsulfanyl)pent-1-en-3-one + phosphate. It functions in the pathway amino-acid biosynthesis; L-methionine biosynthesis via salvage pathway; L-methionine from S-methyl-5-thio-alpha-D-ribose 1-phosphate: step 3/6. The protein operates within amino-acid biosynthesis; L-methionine biosynthesis via salvage pathway; L-methionine from S-methyl-5-thio-alpha-D-ribose 1-phosphate: step 4/6. Bifunctional enzyme that catalyzes the enolization of 2,3-diketo-5-methylthiopentyl-1-phosphate (DK-MTP-1-P) into the intermediate 2-hydroxy-3-keto-5-methylthiopentenyl-1-phosphate (HK-MTPenyl-1-P), which is then dephosphorylated to form the acireductone 1,2-dihydroxy-3-keto-5-methylthiopentene (DHK-MTPene). This Kluyveromyces lactis (strain ATCC 8585 / CBS 2359 / DSM 70799 / NBRC 1267 / NRRL Y-1140 / WM37) (Yeast) protein is Enolase-phosphatase E1.